A 242-amino-acid polypeptide reads, in one-letter code: MEKVSFGFSDVSPQEKTHLVGDVFRRVASRYDLMNDAMSGGLHRLWKDDFVRLVQPKASEHILDMAGGTGDIAFRLAKYGTNVTIADINPAMLEVGKKRAIARSIENLTWKEENAEALSFNDNVFDAYTIAFGIRNVTHIQKALDEAWRVLKVGGRFFCMEFSQTKWSGFSNLYKMYSTHIVPKIGQLLANDEDSYRYLIESIERFPNIEKFSDMIKSAGFVQIRARPILGGLVAIHSGWKV.

S-adenosyl-L-methionine-binding positions include threonine 69, aspartate 87, and 114 to 115 (NA).

Belongs to the class I-like SAM-binding methyltransferase superfamily. MenG/UbiE family.

It catalyses the reaction a 2-demethylmenaquinol + S-adenosyl-L-methionine = a menaquinol + S-adenosyl-L-homocysteine + H(+). The catalysed reaction is a 2-methoxy-6-(all-trans-polyprenyl)benzene-1,4-diol + S-adenosyl-L-methionine = a 5-methoxy-2-methyl-3-(all-trans-polyprenyl)benzene-1,4-diol + S-adenosyl-L-homocysteine + H(+). The protein operates within quinol/quinone metabolism; menaquinone biosynthesis; menaquinol from 1,4-dihydroxy-2-naphthoate: step 2/2. It functions in the pathway cofactor biosynthesis; ubiquinone biosynthesis. Its function is as follows. Methyltransferase required for the conversion of demethylmenaquinol (DMKH2) to menaquinol (MKH2) and the conversion of 2-polyprenyl-6-methoxy-1,4-benzoquinol (DDMQH2) to 2-polyprenyl-3-methyl-6-methoxy-1,4-benzoquinol (DMQH2). The polypeptide is Ubiquinone/menaquinone biosynthesis C-methyltransferase UbiE (Zymomonas mobilis subsp. mobilis (strain ATCC 31821 / ZM4 / CP4)).